A 166-amino-acid polypeptide reads, in one-letter code: Small ribosomal subunit protein uS9 (166 aa).

Positions 1–16 are enriched in acidic residues; that stretch reads MSDTTNEVEETYEVDE. The interval 1 to 45 is disordered; the sequence is MSDTTNEVEETYEVDEQGIAYSSESAPSADAPLRPATIAPANATG.

It belongs to the universal ribosomal protein uS9 family.

The protein is Small ribosomal subunit protein uS9 of Nocardioides sp. (strain ATCC BAA-499 / JS614).